The chain runs to 713 residues: RNA-binding protein vts1 (713 aa).

Over residues 154 to 188 (NSGLSLDKSLPSSPKGDSPSLSSSLPSLTTKSNLS) the composition is skewed to low complexity. 5 disordered regions span residues 154-208 (NSGL…SSKH), 254-336 (EPPA…RDRG), 356-389 (DESS…SRPL), 554-596 (EKIE…GNEL), and 667-713 (KAAK…SSMD). Composition is skewed to polar residues over residues 189-208 (GNLN…SSKH) and 258-281 (SSAS…NANV). Composition is skewed to low complexity over residues 282–297 (TSSL…SKTT) and 304–320 (SKKS…PNTS). Residues 321 to 330 (FFETPHNNIW) show a composition bias toward polar residues. Over residues 369-378 (SPPPPPPPPE) the composition is skewed to pro residues. Positions 559–569 (PPNNSKNQTYR) are enriched in polar residues. The segment covering 570 to 583 (RSSRGSNKTRKSIS) has biased composition (basic residues). The 62-residue stretch at 595–656 (ELPQDIPSWL…LKSFQEVAPL (62 aa)) folds into the SAM domain. Polar residues predominate over residues 670 to 681 (KNQSSESLTSFK). At Ser-673 the chain carries Phosphoserine. Residues 691-702 (SGSMSNEISSNS) are compositionally biased toward low complexity. Residues 703-713 (TKQDVSSSSMD) are compositionally biased toward polar residues.

The protein belongs to the VTS1 family. In terms of assembly, monomer. Binds to RNA.

Its subcellular location is the cytoplasm. It localises to the cytosol. The protein resides in the P-body. RNA-binding protein involved in post-transcriptional regulation through transcript degradation. The protein is RNA-binding protein vts1 of Schizosaccharomyces pombe (strain 972 / ATCC 24843) (Fission yeast).